Here is a 613-residue protein sequence, read N- to C-terminus: Arginine--tRNA ligase (613 aa).

The 'HIGH' region signature appears at 123-133 (PNVAKPMHVGH).

The protein belongs to the class-I aminoacyl-tRNA synthetase family. In terms of assembly, monomer.

The protein resides in the cytoplasm. The enzyme catalyses tRNA(Arg) + L-arginine + ATP = L-arginyl-tRNA(Arg) + AMP + diphosphate. In Caulobacter sp. (strain K31), this protein is Arginine--tRNA ligase.